A 292-amino-acid chain; its full sequence is Protease HtpX homolog (292 aa).

Helical transmembrane passes span 9–29 and 31–51; these read TGVL…VLGN and TGMM…YWYS. His-133 contacts Zn(2+). Glu-134 is an active-site residue. His-137 contacts Zn(2+). Transmembrane regions (helical) follow at residues 148–168 and 185–205; these read LAAV…WMLW and LGAI…QMAI. Glu-210 serves as a coordination point for Zn(2+).

Belongs to the peptidase M48B family. The cofactor is Zn(2+).

It localises to the cell membrane. This is Protease HtpX homolog from Thermococcus sibiricus (strain DSM 12597 / MM 739).